Here is a 944-residue protein sequence, read N- to C-terminus: Valine--tRNA ligase (944 aa).

Positions 43–53 match the 'HIGH' region motif; it reads PNVTGTLHMGH. The 'KMSKS' region motif lies at 550 to 554; that stretch reads KMSKS. Lys-553 is a binding site for ATP. A coiled-coil region spans residues 878-944; the sequence is LVDMDAERTR…TGLREQRAKL (67 aa).

This sequence belongs to the class-I aminoacyl-tRNA synthetase family. ValS type 1 subfamily. As to quaternary structure, monomer.

It is found in the cytoplasm. The enzyme catalyses tRNA(Val) + L-valine + ATP = L-valyl-tRNA(Val) + AMP + diphosphate. Functionally, catalyzes the attachment of valine to tRNA(Val). As ValRS can inadvertently accommodate and process structurally similar amino acids such as threonine, to avoid such errors, it has a 'posttransfer' editing activity that hydrolyzes mischarged Thr-tRNA(Val) in a tRNA-dependent manner. This chain is Valine--tRNA ligase, found in Xanthomonas campestris pv. campestris (strain 8004).